The chain runs to 450 residues: Tubulin alpha chain (450 aa).

Residue glutamine 11 participates in GTP binding. Lysine 40 carries the N6-acetyllysine modification. Residues glutamate 71, serine 140, glycine 144, threonine 145, threonine 179, asparagine 206, and asparagine 228 each coordinate GTP. Glutamate 71 is a Mg(2+) binding site. Glutamate 254 is an active-site residue.

This sequence belongs to the tubulin family. Dimer of alpha and beta chains. A typical microtubule is a hollow water-filled tube with an outer diameter of 25 nm and an inner diameter of 15 nM. Alpha-beta heterodimers associate head-to-tail to form protofilaments running lengthwise along the microtubule wall with the beta-tubulin subunit facing the microtubule plus end conferring a structural polarity. Microtubules usually have 13 protofilaments but different protofilament numbers can be found in some organisms and specialized cells. It depends on Mg(2+) as a cofactor. Acetylation of alpha chains at Lys-40 stabilizes microtubules and affects affinity and processivity of microtubule motors. This modification has a role in multiple cellular functions, ranging from cell motility, cell cycle progression or cell differentiation to intracellular trafficking and signaling.

The protein localises to the cytoplasm. Its subcellular location is the cytoskeleton. The catalysed reaction is GTP + H2O = GDP + phosphate + H(+). Functionally, tubulin is the major constituent of microtubules, a cylinder consisting of laterally associated linear protofilaments composed of alpha- and beta-tubulin heterodimers. Microtubules grow by the addition of GTP-tubulin dimers to the microtubule end, where a stabilizing cap forms. Below the cap, tubulin dimers are in GDP-bound state, owing to GTPase activity of alpha-tubulin. The polypeptide is Tubulin alpha chain (Euplotoides octocarinatus (Freshwater ciliate)).